A 421-amino-acid polypeptide reads, in one-letter code: UDP-N-acetylglucosamine 1-carboxyvinyltransferase (421 aa).

22–23 contributes to the phosphoenolpyruvate binding site; the sequence is KN. Residue Arg92 participates in UDP-N-acetyl-alpha-D-glucosamine binding. Cys116 serves as the catalytic Proton donor. Cys116 carries the 2-(S-cysteinyl)pyruvic acid O-phosphothioketal modification. The UDP-N-acetyl-alpha-D-glucosamine site is built by Asp306 and Val328.

The protein belongs to the EPSP synthase family. MurA subfamily.

Its subcellular location is the cytoplasm. It catalyses the reaction phosphoenolpyruvate + UDP-N-acetyl-alpha-D-glucosamine = UDP-N-acetyl-3-O-(1-carboxyvinyl)-alpha-D-glucosamine + phosphate. It functions in the pathway cell wall biogenesis; peptidoglycan biosynthesis. Functionally, cell wall formation. Adds enolpyruvyl to UDP-N-acetylglucosamine. In Thermotoga maritima (strain ATCC 43589 / DSM 3109 / JCM 10099 / NBRC 100826 / MSB8), this protein is UDP-N-acetylglucosamine 1-carboxyvinyltransferase.